We begin with the raw amino-acid sequence, 125 residues long: Large ribosomal subunit protein uL18 (125 aa).

An N-acetylglycine modification is found at Gly2. 2 positions are modified to N6-acetyllysine: Lys5 and Lys48.

Belongs to the universal ribosomal protein uL18 family. As to quaternary structure, component of the large ribosomal subunit (LSU). Part of the 5S RNP complex, which is a LSU subcomplex composed of the 5S RNA, RPL5 and RPL11. Component of a hexameric 5S RNP precursor complex, composed of 5S RNA, RRS1, RPF2/BXDC1, RPL5, RPL11 and HEATR3; this complex acts as a precursor for ribosome assembly. Interacts with NVL in an ATP-dependent manner. Interacts with RRP1B. Interacts with IPO5, IPO7 and KPNB1; these interactions may be involved in RPL5 nuclear import for the assembly of ribosomal subunits. Interacts with RRP1B.

Its subcellular location is the cytoplasm. It localises to the nucleus. The protein localises to the nucleolus. In terms of biological role, component of the ribosome, a large ribonucleoprotein complex responsible for the synthesis of proteins in the cell. The small ribosomal subunit (SSU) binds messenger RNAs (mRNAs) and translates the encoded message by selecting cognate aminoacyl-transfer RNA (tRNA) molecules. The large subunit (LSU) contains the ribosomal catalytic site termed the peptidyl transferase center (PTC), which catalyzes the formation of peptide bonds, thereby polymerizing the amino acids delivered by tRNAs into a polypeptide chain. The nascent polypeptides leave the ribosome through a tunnel in the LSU and interact with protein factors that function in enzymatic processing, targeting, and the membrane insertion of nascent chains at the exit of the ribosomal tunnel. As part of the 5S RNP/5S ribonucleoprotein particle it is an essential component of the LSU, required for its formation and the maturation of rRNAs. It also couples ribosome biogenesis to p53/TP53 activation. As part of the 5S RNP it accumulates in the nucleoplasm and inhibits MDM2, when ribosome biogenesis is perturbed, mediating the stabilization and the activation of TP53. The protein is Large ribosomal subunit protein uL18 (RPL5) of Sus scrofa (Pig).